We begin with the raw amino-acid sequence, 344 residues long: Mitochondrial mRNA pseudouridine synthase Rpusd3 (344 aa).

A mitochondrion-targeting transit peptide spans 1 to 36 (MGALRVLRYVSMIWRPELGSCARQRDAGFGTEARRP). The tract at residues 25–53 (RDAGFGTEARRPSQPHRSSKHKDLVEDQP) is disordered.

This sequence belongs to the pseudouridine synthase RluA family. Forms a regulatory protein-RNA complex, consisting of RCC1L, NGRN, RPUSD3, RPUSD4, TRUB2, FASTKD2 and 16S mt-rRNA.

The protein localises to the mitochondrion matrix. The catalysed reaction is a uridine in mRNA = a pseudouridine in mRNA. In terms of biological role, catalyzes uridine to pseudouridine isomerization (pseudouridylation) of specific mitochondrial mRNAs (mt-mRNAs), a post-transcriptional modification necessary for their translation. Acts at position 390 in COXI mt-mRNA and at position 697-699 in mitochondrial COXIII mt-mRNA. As a component of a functional protein-RNA module, consisting of RCC1L, NGRN, RPUSD3, RPUSD4, TRUB2, FASTKD2 and 16S mitochondrial ribosomal RNA (16S mt-rRNA), controls 16S mt-rRNA abundance and may play a role in mitochondrial ribosome biogenesis. The polypeptide is Mitochondrial mRNA pseudouridine synthase Rpusd3 (Rpusd3) (Mus musculus (Mouse)).